A 380-amino-acid polypeptide reads, in one-letter code: Cytochrome b (380 aa).

Helical transmembrane passes span 34-54 (FGSL…LLAM), 78-99 (WLIR…FLHI), 114-134 (WNTG…GYVL), and 179-199 (FFAL…IHLT). Heme b-binding residues include His84 and His98. The heme b site is built by His183 and His197. His202 contacts a ubiquinone. 4 helical membrane-spanning segments follow: residues 227–247 (IKDI…ALFS), 289–309 (LGGV…PFLH), 321–341 (LSQT…WIGS), and 348–368 (FIII…ILFP).

The protein belongs to the cytochrome b family. As to quaternary structure, the cytochrome bc1 complex contains 11 subunits: 3 respiratory subunits (MT-CYB, CYC1 and UQCRFS1), 2 core proteins (UQCRC1 and UQCRC2) and 6 low-molecular weight proteins (UQCRH/QCR6, UQCRB/QCR7, UQCRQ/QCR8, UQCR10/QCR9, UQCR11/QCR10 and a cleavage product of UQCRFS1). This cytochrome bc1 complex then forms a dimer. The cofactor is heme b.

The protein resides in the mitochondrion inner membrane. Functionally, component of the ubiquinol-cytochrome c reductase complex (complex III or cytochrome b-c1 complex) that is part of the mitochondrial respiratory chain. The b-c1 complex mediates electron transfer from ubiquinol to cytochrome c. Contributes to the generation of a proton gradient across the mitochondrial membrane that is then used for ATP synthesis. This is Cytochrome b (MT-CYB) from Alectoris chukar (Chukar partridge).